Consider the following 872-residue polypeptide: Probable cation-transporting P-type ATPase (872 aa).

Residues 1–41 (MNKWTGLSAAAVLESRAQHGANLIPTKKLTPFWLLFLEQFK) are Cytoplasmic-facing. The chain crosses the membrane as a helical span at residues 42–62 (SLVVILLLVATILSLVVAIIS). The Extracellular segment spans residues 63-79 (GVNANWLFDHNLVIEWT). The helical transmembrane segment at 80–100 (QPFVILITVLANSLIGSIQEF) threads the bilayer. The Cytoplasmic portion of the chain corresponds to 101–237 (KAQKSAHTLK…TKLSPLQQKL (137 aa)). A helical membrane pass occupies residues 238-257 (EKVGKWFSWFGLGLFVVVFL). The Extracellular portion of the chain corresponds to 258–275 (VQLGLLGFHNFSANWSIA). A helical membrane pass occupies residues 276–293 (LIGAIALVVAIIPEGLVT). Residues 294–642 (FINVIFALSV…EQGRKTFLTC (349 aa)) are Cytoplasmic-facing. The active-site 4-aspartylphosphate intermediate is aspartate 331. The Mg(2+) site is built by aspartate 587 and aspartate 591. The helical transmembrane segment at 643 to 662 (KRVLFNLFLTSIAGTIVVLL) threads the bilayer. Residues 663-685 (GLFVLGEVFREQLSKANHNFQVF) are Extracellular-facing. The helical transmembrane segment at 686-706 (TPTQLLIINLFVHGFPAVALA) threads the bilayer. Over 707–724 (IQPVQEKLMLKPFSTKNL) the chain is Cytoplasmic. The helical transmembrane segment at 725 to 747 (FYNRGGFDLIWQSLLLSFLTLLF) threads the bilayer. Over 748-768 (YSLGMVYAINDPELGKSGDLI) the chain is Extracellular. The helical transmembrane segment at 769 to 788 (NRAGATCGFMVLGGSAALNS) threads the bilayer. Residues 789-801 (LNLMVDRPLVATN) are Cytoplasmic-facing. Residues 802 to 824 (PKHYGIVWLGALSSIFVFLLIIF) form a helical membrane-spanning segment. At 825-842 (INPLGLVFSTLKDLTAHP) the chain is on the extracellular side. Residues 843–863 (VLIGYSFGGVLLYMTINEVVK) form a helical membrane-spanning segment. Residues 864 to 872 (LIRLSYGSV) are Cytoplasmic-facing.

It belongs to the cation transport ATPase (P-type) (TC 3.A.3) family. Type II subfamily.

It is found in the cell membrane. It carries out the reaction ATP + H2O = ADP + phosphate + H(+). In terms of biological role, could mediate calcium influx. This is Probable cation-transporting P-type ATPase (pacL) from Mycoplasma pneumoniae (strain ATCC 29342 / M129 / Subtype 1) (Mycoplasmoides pneumoniae).